The sequence spans 322 residues: Zinc finger C2HC domain-containing protein zchc-1A (322 aa).

C2HC/C3H-type zinc fingers lie at residues 9-38 (PTFP…LASL) and 119-148 (DYVQ…QATR). Residues cysteine 13, cysteine 16, histidine 28, cysteine 32, cysteine 123, cysteine 126, histidine 138, and cysteine 142 each coordinate Zn(2+). A compositionally biased stretch (polar residues) spans 150–159 (QGGNLKSSGG). Residues 150-322 (QGGNLKSSGG…SRNNSRSRIF (173 aa)) are disordered. The span at 174-220 (NEGKKQESSSRNGSAERKPTTRGRDGSLLRARRDDSNDITSRRKSLD) shows a compositional bias: basic and acidic residues. Composition is skewed to polar residues over residues 221-238 (TRTS…TSLS) and 264-274 (LQQSSTPQQRL). A compositionally biased stretch (low complexity) spans 276–295 (TPASTTTTASRSGSRTSSRA). Positions 296–305 (CPRDDSRDSR) are enriched in basic and acidic residues. Residues 311–322 (NNSRNNSRSRIF) are compositionally biased toward low complexity.

Belongs to the ZC2HC1 family. The cofactor is Zn(2+).

The protein is Zinc finger C2HC domain-containing protein zchc-1A of Caenorhabditis elegans.